The chain runs to 466 residues: uncharacterized protein (466 aa).

In terms of domain architecture, Autotransporter spans 178–466; sequence SQGSASSMWM…QGMLGVKYSW (289 aa).

This is an uncharacterized protein from Escherichia coli (strain K12).